We begin with the raw amino-acid sequence, 1372 residues long: MVSLRDNIEVQPLSHNKRVRKNFGHINLVADIPNLIEIQKNSYEKNFLQLDTKDSERKNKGLQSILNSIFPISDPSNIANLEFVKYEFDTPKYDVEECTQRSLSYDSALKVTLRLSIWDIDEDTGSREIKGIKEQQVYMGNIPLMTKNGTFIINGTERVVVSQMHRSPGVFFYHDEGKVHSSRKLLYSARVIPYRGSWLDLEFDAKDIIYFRIDRKRKLYATTLLKAIGMSTEEIIKFYYDSVNYKVVKNKGWAVKFMPSHITAHRLTSDLIDADTGNVLLKAGQKITPRLAKKYAGEGLNNILVSHKALIGKYLSEDLKDPESDEILAKIGEMITVELLSVISDLKIKNISVLVINPQSGPYIRNTLFSDKNQDRESALFDIFRVLRPGEPANIEAAESLFYNLFFDPERYDLSEVGRIKMNSRLELNISDETTVLTTDDIKNILRVLVELKDRKGIIDDIDHLGNRRVRSVGELIENQFRIGLVRMEKSVVERMSAGDIDTVMPHDLVNSKILVSVVKEFFSTSQLSQFMDQTNPLSEITHKRRLSALGPGGLSRDRAGFEVRDVHPTHYGRICPIETPEGQNIGLINSMATYARINKHGFIESPYRKVKDGHVTDEVVYLSAIEEGKYKIGQANSKVDKDGILQGEFINCRVEGGNFVMVEPHEVDFIDVTPMQVVSVAASLIPFLENDDANRALMGSNMQRQAVPLIKTDAPFVGTGVEGVVAKDSGASVLALNDGIVEQVDSNRIVIRAIAQKTESAPSVDIYNLLKFQKSNHNTCINQKPLVKVGHYVKKNDIIADGPSTDNGEIALGRNVLVAFLPWNGYNFEDSILISERIVKEDVFTSVHIEEFEVIARDTRLGPEEITRDIPNVSEEALRHLDEVGIIYVGAEVKAGDILVGKVTPKSESPITPEEKLLRAIFGEKAFDVKDSSLHVPSGVSGTVVEVRVFSRRGVEKDQRAIAIEKQQIEKLAKDRDDELEIIEHFVFSWLEKLLVGQVSINGPKTVKTGQTITSEILKGLSKGQLWQFTVEDANVMNEIEQLKGHYDGKKEALNKRFATKVEKLQSGDDLPQGALKVVKVFIATKHKLQPGDKMAGRHGNKGVISRIVPEEDMPFLEDGTVVDIVLNPLGLPSRMNIGQVLETHLGWASVNLAKKIAGLVEEHKTKHASIEKIKKFLIELYGENINHILEKSDEEIISFCNEAAKGVYFATPVFDGAKVEDVKDMLRLAGQDLSGQVKLIDGRTGEYFDRLVTVGQKYLLKLHHLVDNKIHSRSIGPYSLVTQQPLGGKSHFGGQRFGEMECWALQAYGAAYTLQEMLTVKSDDVNGRIKIYDSIVRGENNFESGIPESFNVMIKEFRSLCLNVKLEVTS.

Belongs to the RNA polymerase beta chain family. As to quaternary structure, the RNAP catalytic core consists of 2 alpha, 1 beta, 1 beta' and 1 omega subunit. When a sigma factor is associated with the core the holoenzyme is formed, which can initiate transcription.

It carries out the reaction RNA(n) + a ribonucleoside 5'-triphosphate = RNA(n+1) + diphosphate. In terms of biological role, DNA-dependent RNA polymerase catalyzes the transcription of DNA into RNA using the four ribonucleoside triphosphates as substrates. The chain is DNA-directed RNA polymerase subunit beta from Rickettsia bellii (strain RML369-C).